The sequence spans 175 residues: Apoptosis regulatory protein Siva (175 aa).

A Phosphotyrosine; by ABL2 modification is found at Tyr34. Residues 36-55 are interaction with BCL2L1 isoform Bcl-x(L) and inhibition of BCL2L1 anti-apoptotic activity; it reads QEVFEKTKRLLFLGAQAYLD. Ser70 bears the Phosphoserine mark. Residues 105–123 are interaction with coxsackievirus B3 VP2; sequence DPSGVASIACSSCVRAVDG.

In terms of assembly, binds through its N-terminal region to the C-terminus of CD27 and to PXMP2/PMP22. Binds to the C-terminus of TNFRSF18/GITR. Isoform 1 binds to BCL2L1/BCLX isoform Bcl-x(L) but not to BAX. As to quaternary structure, (Microbial infection) Interacts with coxsackievirus B3 capsid protein VP2; this interaction inhibits the binding of SIVA1 to CD27. Requires Zn(2+) as cofactor. Post-translationally, phosphorylated by ABL2/ARG in response to oxidative stress. In terms of tissue distribution, ubiquitous. Mostly expressed in thymus, testis, ovary, prostate, small intestine and spleen and less in colon.

It is found in the cytoplasm. Its subcellular location is the nucleus. In terms of biological role, induces CD27-mediated apoptosis. Inhibits BCL2L1 isoform Bcl-x(L) anti-apoptotic activity. Inhibits activation of NF-kappa-B and promotes T-cell receptor-mediated apoptosis. The sequence is that of Apoptosis regulatory protein Siva (SIVA1) from Homo sapiens (Human).